Reading from the N-terminus, the 1247-residue chain is Structural polyprotein (1247 aa).

Residues 36 to 67 (RPAGQLAQLISAVSRLALRTVPQKPRRTRKIK) form a host transcription inhibition region. The disordered stretch occupies residues 54–103 (RTVPQKPRRTRKIKKQKQVKQEQQSTTNQKKKAPKQKQTQKKKRPGRRER). Composition is skewed to basic residues over residues 59 to 71 (KPRRTRKIKKQKQ) and 82 to 100 (QKKKAPKQKQTQKKKRPGR). The short motif at 60 to 98 (PRRTRKIKKQKQVKQEQQSTTNQKKKAPKQKQTQKKKRP) is the Nuclear localization signal element. Positions 83–113 (KKKAPKQKQTQKKKRPGRRERMCMKIENDCI) are binding to the viral RNA. The segment at 98–112 (PGRRERMCMKIENDC) is ribosome-binding. Cysteines 112 and 127 form a disulfide. The region spanning 112 to 260 (CIFEVRHEGK…KITPEGSVEW (149 aa)) is the Peptidase S3 domain. Catalysis depends on His-138, which acts as the Charge relay system. The Nuclear export signal signature appears at 143–153 (IDNADLAKLAF). Residues 154 to 159 (KRSSKY) are interaction with spike glycoprotein E2. Asp-160 acts as the Charge relay system in catalysis. The tract at residues 182–192 (PEGYYNWHHGA) is dimerization of the capsid protein. Ser-212 functions as the Charge relay system in the catalytic mechanism. The interval 218-222 (DNKGR) is dimerization of the capsid protein. The functions as an uncleaved signal peptide for the precursor of protein E3/E2 stretch occupies residues 261–273 (SLALPVMCLLANT). Disulfide bonds link Cys-268–Cys-277, Cys-282–Cys-286, Cys-285–Cys-317, Cys-343–Cys-449, Cys-346–Cys-352, Cys-415–Cys-429, Cys-477–Cys-590, Cys-525–Cys-549, and Cys-527–Cys-544. Asn-272 carries an N-linked (GlcNAc...) asparagine; by host glycan. Residues Asn-587 and Asn-669 are each glycosylated (N-linked (GlcNAc...) asparagine; by host). Residues 692-712 (IAVLAAASIVITSLVGLSLGM) form a helical membrane-spanning segment. The segment at 715–719 (CARRR) is interaction with the capsid protein. S-palmitoyl cysteine; by host attachment occurs at residues Cys-720, Cys-740, and Cys-741. The helical transmembrane segment at 720-740 (CITPYELTPGATIPFLLGVLC) threads the bilayer. Residues 720 to 740 (CITPYELTPGATIPFLLGVLC) form a transient transmembrane before p62-6K protein processing region. Cysteines 720 and 741 form a disulfide. Residues 763-783 (PLFWLQLLIPLSAAIVVCNCL) traverse the membrane as a helical segment. 4 cysteine pairs are disulfide-bonded: Cys-857–Cys-922, Cys-870–Cys-902, Cys-871–Cys-904, and Cys-876–Cys-886. Residues 892 to 909 (VYPFMWGGAYCFCDAENT) form an E1 fusion peptide loop region. N-linked (GlcNAc...) asparagine; by host glycosylation is found at Asn-949 and Asn-1078. Intrachain disulfides connect Cys-1067-Cys-1079, Cys-1109-Cys-1184, Cys-1114-Cys-1188, and Cys-1136-Cys-1178. The chain crosses the membrane as a helical span at residues 1224–1244 (GVGLVVAIAALILIIVLCVSF). Residue Cys-1241 is the site of S-palmitoyl cysteine; by host attachment. Cys-1241 carries S-stearoyl cysteine; by host lipidation.

In terms of assembly, homodimer. Homomultimer. Interacts with host karyopherin KPNA4; this interaction allows the nuclear import of the viral capsid protein. Interacts with spike glycoprotein E2. Interacts with host IRAK1; the interaction leads to inhibition of IRAK1-dependent signaling. As to quaternary structure, the precursor of protein E3/E2 and E1 form a heterodimer shortly after synthesis. The precursor of protein E3/E2 and E1 form a heterodimer shortly after synthesis. Processing of the precursor of protein E3/E2 into E2 and E3 results in a heterodimer of the spike glycoproteins E2 and E1. Spike at virion surface are constituted of three E2-E1 heterodimers. After target cell attachment and endocytosis, E1 change conformation to form homotrimers. Interacts with 6K protein. In terms of assembly, interacts with spike glycoprotein E1. Processing of the precursor of protein E3/E2 into E2 and E3 results in a heterodimer of the spike glycoproteins E2 and E1. Spike at virion surface are constituted of a trimer of E2-E1 heterodimers. Interacts with 6K protein. Interacts with host MXRA8; this interaction mediates virus entry. As to quaternary structure, oligomer. Interacts with spike glycoprotein E1. Interacts with spike glycoprotein E2. Post-translationally, structural polyprotein: Specific enzymatic cleavages in vivo yield mature proteins. Capsid protein is auto-cleaved during polyprotein translation, unmasking a signal peptide at the N-terminus of the precursor of E3/E2. The remaining polyprotein is then targeted to the host endoplasmic reticulum, where host signal peptidase cleaves it into pE2, 6K and E1 proteins. pE2 is further processed to mature E3 and E2 by host furin in trans-Golgi vesicle. Palmitoylated via thioester bonds. These palmitoylations may induce disruption of the C-terminus transmembrane. This would result in the reorientation of E2 C-terminus from lumenal to cytoplasmic side. In terms of processing, N-glycosylated. Post-translationally, palmitoylated via thioester bonds.

The protein localises to the virion. The protein resides in the host cytoplasm. It localises to the host cell membrane. Its subcellular location is the host nucleus. It is found in the virion membrane. The protein localises to the host Golgi apparatus. The protein resides in the host trans-Golgi network. It localises to the host endoplasmic reticulum. The enzyme catalyses Autocatalytic release of the core protein from the N-terminus of the togavirus structural polyprotein by hydrolysis of a -Trp-|-Ser- bond.. Functionally, forms an icosahedral capsid with a T=4 symmetry composed of 240 copies of the capsid protein surrounded by a lipid membrane through which penetrate 80 spikes composed of trimers of E1-E2 heterodimers. The capsid protein binds to the viral RNA genome at a site adjacent to a ribosome binding site for viral genome translation following genome release. Possesses a protease activity that results in its autocatalytic cleavage from the nascent structural protein. Following its self-cleavage, the capsid protein transiently associates with ribosomes, and within several minutes the protein binds to viral RNA and rapidly assembles into icosahedric core particles. The resulting nucleocapsid eventually associates with the cytoplasmic domain of the spike glycoprotein E2 at the cell membrane, leading to budding and formation of mature virions. In case of infection, new virions attach to target cells and after clathrin-mediated endocytosis their membrane fuses with the host endosomal membrane. This leads to the release of the nucleocapsid into the cytoplasm, followed by an uncoating event necessary for the genomic RNA to become accessible. The uncoating might be triggered by the interaction of capsid proteins with ribosomes. Binding of ribosomes would release the genomic RNA since the same region is genomic RNA-binding and ribosome-binding. Specifically inhibits interleukin-1 receptor-associated kinase 1/IRAK1-dependent signaling during viral entry, representing a means by which the alphaviruses may evade innate immune detection and activation prior to viral gene expression. Its function is as follows. Provides the signal sequence for the translocation of the precursor of protein E3/E2 to the host endoplasmic reticulum. Furin-cleaved E3 remains associated with spike glycoprotein E1 and mediates pH protection of the latter during the transport via the secretory pathway. After virion release from the host cell, the assembly protein E3 is gradually released in the extracellular space. In terms of biological role, plays a role in viral attachment to target host cell, by binding to the cell receptor MXRA8. Synthesized as a p62 precursor which is processed by furin at the cell membrane just before virion budding, giving rise to E2-E1 heterodimer. The p62-E1 heterodimer is stable, whereas E2-E1 is unstable and dissociate at low pH. p62 is processed at the last step, presumably to avoid E1 fusion activation before its final export to cell surface. E2 C-terminus contains a transitory transmembrane that would be disrupted by palmitoylation, resulting in reorientation of the C-terminal tail from lumenal to cytoplasmic side. This step is critical since E2 C-terminus is involved in budding by interacting with capsid proteins. This release of E2 C-terminus in cytoplasm occurs lately in protein export, and precludes premature assembly of particles at the endoplasmic reticulum membrane. Acts as a viroporin that participates in virus glycoprotein processing and transport to the plasma membrane, cell permeabilization and budding of viral particles. Disrupts the calcium homeostasis of the cell, probably at the endoplasmic reticulum level. This leads to cytoplasmic calcium elevation. Because of its lipophilic properties, the 6K protein is postulated to influence the selection of lipids that interact with the transmembrane domains of the glycoproteins, which, in turn, affects the deformability of the bilayer required for the extreme curvature that occurs as budding proceeds. Present in low amount in virions, about 3% compared to viral glycoproteins. Functionally, class II viral fusion protein. Fusion activity is inactive as long as E1 is bound to E2 in mature virion. After virus attachment to target cell via host MXRA8 and endocytosis, acidification of the endosome induce dissociation of E1/E2 heterodimer and concomitant trimerization of the E1 subunits. This E1 trimer is fusion active, and promotes release of viral nucleocapsid in cytoplasm after endosome and viral membrane fusion. Efficient fusion requires the presence of cholesterol and sphingolipid in the target membrane. The polypeptide is Structural polyprotein (O'nyong-nyong virus (strain Gulu) (ONNV)).